The following is a 471-amino-acid chain: 3-isopropylmalate dehydratase large subunit (471 aa).

3 residues coordinate [4Fe-4S] cluster: cysteine 347, cysteine 407, and cysteine 410.

The protein belongs to the aconitase/IPM isomerase family. LeuC type 1 subfamily. In terms of assembly, heterodimer of LeuC and LeuD. Requires [4Fe-4S] cluster as cofactor.

The catalysed reaction is (2R,3S)-3-isopropylmalate = (2S)-2-isopropylmalate. It functions in the pathway amino-acid biosynthesis; L-leucine biosynthesis; L-leucine from 3-methyl-2-oxobutanoate: step 2/4. Catalyzes the isomerization between 2-isopropylmalate and 3-isopropylmalate, via the formation of 2-isopropylmaleate. The protein is 3-isopropylmalate dehydratase large subunit of Acaryochloris marina (strain MBIC 11017).